The primary structure comprises 194 residues: Lymphocyte antigen 6 complex locus protein G5b (194 aa).

The first 18 residues, 1–18 (MRARVLVGMLTMVGFAMG), serve as a signal peptide directing secretion. The region spanning 26–118 (RTCHLCLLED…SAQHQSTLRG (93 aa)) is the UPAR/Ly6 domain. 5 disulfide bridges follow: Cys28–Cys55, Cys31–Cys40, Cys47–Cys73, Cys81–Cys98, and Cys99–Cys104. N-linked (GlcNAc...) asparagine glycosylation occurs at Asn63. A glycan (N-linked (GlcNAc...) asparagine) is linked at Asn141.

In terms of assembly, monomer. N-glycosylated.

It is found in the secreted. The sequence is that of Lymphocyte antigen 6 complex locus protein G5b (Ly6g5b) from Mus musculus (Mouse).